The sequence spans 301 residues: Probable alpha-L-glutamate ligase (301 aa).

Residues L104–E287 enclose the ATP-grasp domain. Residues K141, E178–Y179, D187, and R211–N213 contribute to the ATP site. Mg(2+) contacts are provided by D248, E260, and N262. Residues D248, E260, and N262 each contribute to the Mn(2+) site.

The protein belongs to the RimK family. Mg(2+) serves as cofactor. Requires Mn(2+) as cofactor.

The sequence is that of Probable alpha-L-glutamate ligase from Methanococcoides burtonii (strain DSM 6242 / NBRC 107633 / OCM 468 / ACE-M).